The primary structure comprises 128 residues: Probable 4-amino-4-deoxy-L-arabinose-phosphoundecaprenol flippase subunit ArnF (128 aa).

At 1 to 2 (MG) the chain is on the cytoplasmic side. Residues 3 to 23 (LMWGLFSVIIASVAQLSLGFA) traverse the membrane as a helical segment. Residues 24 to 35 (ASHLPPMTHLWD) are Periplasmic-facing. The helical transmembrane segment at 36–56 (FIAALLAFGLDARILLLGLLG) threads the bilayer. Topologically, residues 57 to 76 (YLLSVFCWYKTLHKLALSKA) are cytoplasmic. The chain crosses the membrane as a helical span at residues 77-97 (YALLSMSYVLVWIASMVLPGW). The Periplasmic portion of the chain corresponds to 98-100 (EGT). Residues 101–121 (FSLKALLGVACIMSGLMLIFL) form a helical membrane-spanning segment. Over 122–128 (PTTKQRY) the chain is Cytoplasmic.

Belongs to the ArnF family. Heterodimer of ArnE and ArnF.

It is found in the cell inner membrane. The protein operates within bacterial outer membrane biogenesis; lipopolysaccharide biosynthesis. Translocates 4-amino-4-deoxy-L-arabinose-phosphoundecaprenol (alpha-L-Ara4N-phosphoundecaprenol) from the cytoplasmic to the periplasmic side of the inner membrane. This Shigella sonnei (strain Ss046) protein is Probable 4-amino-4-deoxy-L-arabinose-phosphoundecaprenol flippase subunit ArnF.